Consider the following 139-residue polypeptide: ATP synthase epsilon chain (139 aa).

This sequence belongs to the ATPase epsilon chain family. As to quaternary structure, F-type ATPases have 2 components, CF(1) - the catalytic core - and CF(0) - the membrane proton channel. CF(1) has five subunits: alpha(3), beta(3), gamma(1), delta(1), epsilon(1). CF(0) has three main subunits: a, b and c.

The protein resides in the cell membrane. Produces ATP from ADP in the presence of a proton gradient across the membrane. This chain is ATP synthase epsilon chain, found in Pediococcus pentosaceus (strain ATCC 25745 / CCUG 21536 / LMG 10740 / 183-1w).